We begin with the raw amino-acid sequence, 274 residues long: Bis(5'-nucleosyl)-tetraphosphatase, symmetrical (274 aa).

The protein belongs to the Ap4A hydrolase family.

The enzyme catalyses P(1),P(4)-bis(5'-adenosyl) tetraphosphate + H2O = 2 ADP + 2 H(+). Hydrolyzes diadenosine 5',5'''-P1,P4-tetraphosphate to yield ADP. The polypeptide is Bis(5'-nucleosyl)-tetraphosphatase, symmetrical (Shewanella sp. (strain ANA-3)).